The following is a 933-amino-acid chain: Clumping factor A (933 aa).

A signal peptide spans 1–39 (MNMKKKEKHAIRKKSIGVASVLVGTLIGFGLLSSKEADA). Positions 9–20 (HAIRKKSIGVAS) match the YSIRK-G/S signaling motif motif. Disordered regions lie at residues 34 to 200 (SKEA…SNKD) and 529 to 904 (FNNG…SEDE). Positions 40-542 (SENSVTQSDS…SGSGDGIDKP (503 aa)) are ligand binding A region. Residues 47–65 (SDSASNESKSNDSSSVSAA) show a composition bias toward low complexity. The span at 71–105 (TNVSDTKTSSNTNNGETSVAQNPAQQETTQSSSTN) shows a compositional bias: polar residues. Residues 106–132 (ATTEETPVTGEATTTTTNQANTPATTQ) show a composition bias toward low complexity. The segment covering 133 to 200 (SSNTNAEELV…PQSTDASNKD (68 aa)) has biased composition (polar residues). A compositionally biased stretch (acidic residues) spans 547–565 (QPDEPGEIEPIPEDSDSDP). The span at 566–598 (GSDSGSDSNSDSGSDSGSDSTSDSGSDSASDSD) shows a compositional bias: low complexity. Acidic residues predominate over residues 599-861 (SASDSDSASD…DSDSESDSNS (263 aa)). The span at 862-880 (DSESGSNNNVVPPNSPKNG) shows a compositional bias: low complexity. The segment covering 887–896 (NEAKDSKEPL) has biased composition (basic and acidic residues). The LPXTG sorting signal signature appears at 896-900 (LPDTG). Thr899 is modified (pentaglycyl murein peptidoglycan amidated threonine). Residues 900–933 (GSEDEANTSLIWGLLASIGSLLLFRRKKENKDKK) constitute a propeptide, removed by sortase.

Belongs to the serine-aspartate repeat-containing protein (SDr) family.

It is found in the secreted. It localises to the cell wall. Functionally, cell surface-associated protein implicated in virulence. Promotes bacterial attachment exclusively to the gamma-chain of human fibrinogen. Induces formation of bacterial clumps, which diminish the ability of group IIA phospholipase A2 to cause bacterial phospholipid hydrolysis and killing. Significantly decreases macrophage phagocytosis possibly thanks to the clumps, clumped bacteria being too large to be phagocytosed. Dominant factor responsible for human platelet aggregation, which may be an important mechanism for initiating infective endocarditis. Enhances spleen cell proliferative response in vitro, contributing significantly to the immunostimulatory activity of S.aureus. The chain is Clumping factor A (clfA) from Staphylococcus aureus (strain Newman).